A 572-amino-acid polypeptide reads, in one-letter code: MRTSQYLLSTLKETPADAEVISHQLMLRAGMIRKLASGLYTWLPTGLRVLNKVENIVREEMNYAGAIEVSMPVVQPADLWQESGRWEQYGPELLRFVDRGDRPFVLGPTHEEVITDLVRNEISSYKQLPLNFYQIQTKFRDEVRPRFGVMRSREFLMKDAYSFHTTQESLQETYEAMYAAYSRIFSRMGLDFRAVQADTGSIGGNASHEFQVLAQSGEDDIVFSTASDYAANIELAEALAPATGRAAANQPMQLVNTPDARTIAELVEQHGLPIEKTVKTLLVHASEESGHALVALLVRGDHELNEVKAEKLALVASPLTFANEAEIRALVNAGPGSLGPVNLPLPIVADRAVAAMSDFGAGANIDGKHYFGINWERDAALPQIADIRNVIEGDPSPDGKGTLLIKRGIEVGHIFQLGTKYTEALNATVQGEDGRNQLMTMGCYGIGVTRVVAAAIEQNHDERGIIWPDAIAPFQVAILPMNMHKSFRVKEVAERLYDGLRAKGIEVLLDDRKERPGVMFADMELIGIPHTIVIGDRNLDNNEIEYKYRRSGDKLMISVDEIEAFLQAQIAR.

It belongs to the class-II aminoacyl-tRNA synthetase family. ProS type 1 subfamily. As to quaternary structure, homodimer.

Its subcellular location is the cytoplasm. It carries out the reaction tRNA(Pro) + L-proline + ATP = L-prolyl-tRNA(Pro) + AMP + diphosphate. Its function is as follows. Catalyzes the attachment of proline to tRNA(Pro) in a two-step reaction: proline is first activated by ATP to form Pro-AMP and then transferred to the acceptor end of tRNA(Pro). As ProRS can inadvertently accommodate and process non-cognate amino acids such as alanine and cysteine, to avoid such errors it has two additional distinct editing activities against alanine. One activity is designated as 'pretransfer' editing and involves the tRNA(Pro)-independent hydrolysis of activated Ala-AMP. The other activity is designated 'posttransfer' editing and involves deacylation of mischarged Ala-tRNA(Pro). The misacylated Cys-tRNA(Pro) is not edited by ProRS. In Edwardsiella ictaluri (strain 93-146), this protein is Proline--tRNA ligase.